The chain runs to 224 residues: Putative O-methyltransferase MLBr01075 (224 aa).

S-adenosyl-L-methionine contacts are provided by residues valine 51, glutamate 73, 75–76, serine 81, aspartate 99, and isoleucine 100; that span reads GT. Residue aspartate 147 participates in substrate binding. Aspartate 149 lines the S-adenosyl-L-methionine pocket.

It belongs to the class I-like SAM-binding methyltransferase superfamily. Cation-dependent O-methyltransferase family.

The protein is Putative O-methyltransferase MLBr01075 of Mycobacterium leprae (strain Br4923).